We begin with the raw amino-acid sequence, 166 residues long: Putative 4-hydroxy-4-methyl-2-oxoglutarate aldolase 3 (166 aa).

The residue at position 2 (Ala2) is an N-acetylalanine. Residues 81–84 (GGNL) and Arg103 contribute to the substrate site. Residue Asp104 participates in a divalent metal cation binding.

The protein belongs to the class II aldolase/RraA-like family. As to quaternary structure, homotrimer. Requires a divalent metal cation as cofactor.

The catalysed reaction is 4-hydroxy-4-methyl-2-oxoglutarate = 2 pyruvate. The enzyme catalyses oxaloacetate + H(+) = pyruvate + CO2. Catalyzes the aldol cleavage of 4-hydroxy-4-methyl-2-oxoglutarate (HMG) into 2 molecules of pyruvate. Also contains a secondary oxaloacetate (OAA) decarboxylase activity due to the common pyruvate enolate transition state formed following C-C bond cleavage in the retro-aldol and decarboxylation reactions. The polypeptide is Putative 4-hydroxy-4-methyl-2-oxoglutarate aldolase 3 (Arabidopsis thaliana (Mouse-ear cress)).